The following is a 325-amino-acid chain: Olfactory receptor 10AC1 (325 aa).

At 1 to 26 (MDSPSNATVPCGFLLQGFSEFPHLRP) the chain is on the extracellular side. N6 carries N-linked (GlcNAc...) asparagine glycosylation. The helical transmembrane segment at 27–47 (VLFLLLLGVHLATLGGNLLIL) threads the bilayer. Residues 48-57 (VAVASMPSRQ) lie on the Cytoplasmic side of the membrane. Residues 58–78 (PMLLFLCQLSAIELCYTLVVV) traverse the membrane as a helical segment. Residues 79–101 (PRSLVDLSTPGHRRGSPISFLSC) lie on the Extracellular side of the membrane. The helical transmembrane segment at 102 to 122 (AFQMQMFVALGGAECFLLAAM) threads the bilayer. Residues 123 to 147 (AYDRYVAICHPLRYAAVVTPGLCAR) lie on the Cytoplasmic side of the membrane. A helical transmembrane segment spans residues 148-168 (LALACCLRGLAVSVGLTVAIF). The Extracellular segment spans residues 169–171 (HLP). Residues 172–192 (FCGSRLLLHFFCDITALLHLA) traverse the membrane as a helical segment. Residues 193-200 (CTRSYADE) lie on the Cytoplasmic side of the membrane. The helical transmembrane segment at 201–221 (LPLLGACLVLLLLPSVLILAS) threads the bilayer. The Extracellular segment spans residues 222–243 (YGAIAAALRRLRCPKGRGKAAS). The helical transmembrane segment at 244–264 (TCALHLAVTFLHYGCATFMYV) threads the bilayer. Topologically, residues 265 to 325 (RPRASYSPRL…QAPGGDLREL (61 aa)) are cytoplasmic.

It belongs to the G-protein coupled receptor 1 family.

It localises to the cell membrane. In terms of biological role, odorant receptor. This Homo sapiens (Human) protein is Olfactory receptor 10AC1 (OR10AC1).